The following is a 429-amino-acid chain: Cleavage stimulation factor subunit 50 (429 aa).

The tract at residues 20–41 is hydrophobic; it reads LNALIVAHLRHHNLSQVASAVA. WD repeat units lie at residues 121–160, 174–213, 218–257, 264–303, 308–347, 351–392, and 396–429; these read EHKS…QMIS, DHAE…AKRA, QDTH…CFLP, GVSG…CVRS, HGKS…MVKE, AKRV…KVAK, and NHNG…KESV.

Homodimer. Belongs to the CSTF complex. Forms a complex with cleavage and polyadenylation specificity factor (CPSF) subunits CSTF64, PABN3, CPSF30, FIPS5 and CPSF100.

It localises to the nucleus. Functionally, one of the multiple factors required for polyadenylation and 3'-end cleavage of pre-mRNAs. May be responsible for the interaction of CSTF with other factors to form a stable complex on the pre-mRNA. In Arabidopsis thaliana (Mouse-ear cress), this protein is Cleavage stimulation factor subunit 50.